Here is a 422-residue protein sequence, read N- to C-terminus: Gamma-glutamyl phosphate reductase (422 aa).

This sequence belongs to the gamma-glutamyl phosphate reductase family.

It localises to the cytoplasm. The enzyme catalyses L-glutamate 5-semialdehyde + phosphate + NADP(+) = L-glutamyl 5-phosphate + NADPH + H(+). The protein operates within amino-acid biosynthesis; L-proline biosynthesis; L-glutamate 5-semialdehyde from L-glutamate: step 2/2. Its function is as follows. Catalyzes the NADPH-dependent reduction of L-glutamate 5-phosphate into L-glutamate 5-semialdehyde and phosphate. The product spontaneously undergoes cyclization to form 1-pyrroline-5-carboxylate. This chain is Gamma-glutamyl phosphate reductase, found in Nitrosomonas eutropha (strain DSM 101675 / C91 / Nm57).